We begin with the raw amino-acid sequence, 618 residues long: Manganese lipoxygenase (618 aa).

The N-terminal stretch at 1–16 (MRSRILAIVFAARHVA) is a signal peptide. Residues 36–45 (SSTTVLPSPT) show a composition bias toward low complexity. The tract at residues 36–58 (SSTTVLPSPTQYTLPNNDPNQGA) is disordered. Over residues 46–58 (QYTLPNNDPNQGA) the composition is skewed to polar residues. One can recognise a Lipoxygenase domain in the interval 47–618 (YTLPNNDPNQ…PAVNPFFLSV (572 aa)). Asparagine 60, asparagine 91, asparagine 106, asparagine 116, and asparagine 157 each carry an N-linked (GlcNAc...) asparagine glycan. 4 residues coordinate Mn(2+): histidine 290, histidine 294, histidine 478, and asparagine 482. A glycan (N-linked (GlcNAc...) asparagine) is linked at asparagine 513. Valine 618 provides a ligand contact to Mn(2+).

It belongs to the lipoxygenase family. Manganese lipoxygenase subfamily. The cofactor is Mn(2+). In terms of processing, N- and O-glycosylated.

The protein localises to the secreted. It carries out the reaction (9Z,12Z)-octadecadienoate + O2 = (11S)-hydroperoxy-(9Z,12Z)-octadecadienoate. It catalyses the reaction (9Z,12Z)-octadecadienoate + O2 = (13R)-hydroperoxy-(9Z,11E)-octadecadienoate. The catalysed reaction is (9Z,12Z,15Z)-octadecatrienoate + O2 = (11S)-hydroperoxy-(9Z,12Z,15Z)-octadecatrienoate. The enzyme catalyses (9Z,12Z,15Z)-octadecatrienoate + O2 = (13R)-hydroperoxy-(9Z,11E,15Z)-octadecatrienoate. Its function is as follows. Lipoxygenase that metabolizes linoleic and alpha-linolenic acids to 11S- and 13R-hydroperoxy fatty acids. At the end of lipoxygenation, the intermediate product 11S-HPODE from linoleic acid is then transformed into 13R-HPODE as the final product. It also acts on alpha-linolenic acid producing 11S-HPOTrE and 13R-HPOTrE with subsequent transformation of 11S-HPOTrE to 13R-HPOTrE as final product. The polypeptide is Manganese lipoxygenase (Gaeumannomyces avenae (Oat take-all root rot fungus)).